Reading from the N-terminus, the 427-residue chain is tRNA(Ile)-lysidine synthase (427 aa).

Residue 25 to 30 coordinates ATP; the sequence is SGGLDS.

It belongs to the tRNA(Ile)-lysidine synthase family.

It localises to the cytoplasm. It carries out the reaction cytidine(34) in tRNA(Ile2) + L-lysine + ATP = lysidine(34) in tRNA(Ile2) + AMP + diphosphate + H(+). Ligates lysine onto the cytidine present at position 34 of the AUA codon-specific tRNA(Ile) that contains the anticodon CAU, in an ATP-dependent manner. Cytidine is converted to lysidine, thus changing the amino acid specificity of the tRNA from methionine to isoleucine. This chain is tRNA(Ile)-lysidine synthase, found in Histophilus somni (strain 2336) (Haemophilus somnus).